A 308-amino-acid chain; its full sequence is Membrane protein insertase YidC 1 (308 aa).

Positions 1–22 are cleaved as a signal peptide; sequence MKSIKRFALSAMGVAMLLVLTG. Residue cysteine 23 is the site of N-palmitoyl cysteine attachment. The S-diacylglycerol cysteine moiety is linked to residue cysteine 23. 5 helical membrane-spanning segments follow: residues 60-80, 135-155, 168-188, 211-226, and 232-252; these read FGVAIIIVTIIVRLIILPLGI, FGGVGCFPILLQMPFFSAIYF, YLGIPLGSPSMILVACAGVLY, MIYMSPLMIVVFSLFS, and LYWVVGGFMMILQQFIVNYIV. The segment at 263–308 is disordered; the sequence is ELAKNPPKASAFSKPSGRKDVTPEQPTAITSKKKHKNRNAGKQRSR. A compositionally biased stretch (basic residues) spans 293–308; the sequence is SKKKHKNRNAGKQRSR.

It belongs to the OXA1/ALB3/YidC family. Type 2 subfamily.

It is found in the cell membrane. In terms of biological role, required for the insertion and/or proper folding and/or complex formation of integral membrane proteins into the membrane. Involved in integration of membrane proteins that insert both dependently and independently of the Sec translocase complex, as well as at least some lipoproteins. This chain is Membrane protein insertase YidC 1, found in Streptococcus pneumoniae serotype 4 (strain ATCC BAA-334 / TIGR4).